Consider the following 364-residue polypeptide: Alanine racemase (364 aa).

Lysine 35 acts as the Proton acceptor; specific for D-alanine in catalysis. Lysine 35 is modified (N6-(pyridoxal phosphate)lysine). Arginine 132 contacts substrate. The Proton acceptor; specific for L-alanine role is filled by tyrosine 260. Substrate is bound at residue methionine 308.

Belongs to the alanine racemase family. It depends on pyridoxal 5'-phosphate as a cofactor.

The catalysed reaction is L-alanine = D-alanine. It functions in the pathway amino-acid biosynthesis; D-alanine biosynthesis; D-alanine from L-alanine: step 1/1. Catalyzes the interconversion of L-alanine and D-alanine. May also act on other amino acids. In Acidithiobacillus ferrooxidans (strain ATCC 23270 / DSM 14882 / CIP 104768 / NCIMB 8455) (Ferrobacillus ferrooxidans (strain ATCC 23270)), this protein is Alanine racemase (alr).